Consider the following 523-residue polypeptide: Aldehyde oxidase GLOX (523 aa).

The signal sequence occupies residues 1–19 (MILDAAIVALADLPGTWEL).

Its subcellular location is the secreted. The protein resides in the cell wall. It carries out the reaction an aldehyde + O2 + H2O = a carboxylate + H2O2 + H(+). In terms of biological role, catalyzes the oxidation of aldehydes to the corresponding carboxylate by coupling the reaction to the reduction of dioxygen to hydrogen peroxide. Substrates include glyoxal and other aldehydes. Involved in disease resistance against the grapevine powdery mildew E.necator. Is sufficient to confer disease resistance to E.necator. Can produce hydrogen peroxide in response to E.necator infection, and this may directly play a role in the defense mechanism during plant-pathogen interactions. This Vitis pseudoreticulata (Chinese wild grapevine) protein is Aldehyde oxidase GLOX.